Consider the following 418-residue polypeptide: Torsin-4A-B (418 aa).

Residues 128–144 form a helical membrane-spanning segment; the sequence is CLLLFVGIVCFQIFNAI. 200–207 is a binding site for ATP; sequence GPSGVGKS.

Belongs to the ClpA/ClpB family. Torsin subfamily.

It is found in the membrane. The sequence is that of Torsin-4A-B (tor4a-b) from Xenopus laevis (African clawed frog).